We begin with the raw amino-acid sequence, 275 residues long: tRNA pseudouridine synthase A (275 aa).

The active-site Nucleophile is D55. A substrate-binding site is contributed by Y111.

This sequence belongs to the tRNA pseudouridine synthase TruA family.

The enzyme catalyses uridine(38/39/40) in tRNA = pseudouridine(38/39/40) in tRNA. Its function is as follows. Formation of pseudouridine at positions 38, 39 and 40 in the anticodon stem and loop of transfer RNAs. In Methanococcoides burtonii (strain DSM 6242 / NBRC 107633 / OCM 468 / ACE-M), this protein is tRNA pseudouridine synthase A.